We begin with the raw amino-acid sequence, 460 residues long: Transcription factor TGA10 (460 aa).

Residues 1-11 (MQGHHQNHHQH) show a composition bias toward basic residues. Disordered regions lie at residues 1 to 29 (MQGHHQNHHQHLSSSSATSSHGNFMNKDG) and 43 to 163 (LDGQ…PKTL). The span at 12–21 (LSSSSATSSH) shows a compositional bias: low complexity. Polar residues-rich tracts occupy residues 65-81 (TQNLAMRPPTSTLNIFP) and 121-136 (DLTNHSQFHQPPQGSK). The span at 138–162 (IKKEGNRKGLASSDHDIPKSSDPKT) shows a compositional bias: basic and acidic residues. The region spanning 159-203 (DPKTLRRLAQNREAARKSRLRKKAYVQQLESCRIKLTQLEQEIQR) is the bZIP domain. Residues 161–181 (KTLRRLAQNREAARKSRLRKK) form a basic motif region. The short motif at 163–170 (LRRLAQNR) is the Nuclear localization signal element. The leucine-zipper stretch occupies residues 187–201 (LESCRIKLTQLEQEI). Residues 236 to 455 (AAVFDMEYAR…QALSSLWLAR (220 aa)) enclose the DOG1 domain.

Belongs to the bZIP family. As to quaternary structure, homodimer. Binds DNA as a dimer. Interacts with floral glutaredoxins GRXC7/ROXY1 and GRXC8/ROXY2 in the nucleus. Interacts with TGA1, TGA2, TGA3, TGA4, TGA5, TGA6, TGA7, TGA9 and PAN. Expressed at low levels in inflorescence apex and flowers.

It localises to the nucleus. Its function is as follows. Together with TGA9, basic leucine-zipper transcription factor required for anther development, probably via the activation of SPL expression in anthers and via the regulation of genes with functions in early and middle tapetal development. Required for signaling responses to pathogen-associated molecular patterns (PAMPs) such as flg22 that involves chloroplastic reactive oxygen species (ROS) production and subsequent expression of H(2)O(2)-responsive genes. The polypeptide is Transcription factor TGA10 (Arabidopsis thaliana (Mouse-ear cress)).